A 207-amino-acid chain; its full sequence is Pyrrolidone-carboxylate peptidase (207 aa).

Catalysis depends on residues Glu80, Cys143, and His167.

The protein belongs to the peptidase C15 family. In terms of assembly, homotetramer.

Its subcellular location is the cytoplasm. It catalyses the reaction Release of an N-terminal pyroglutamyl group from a polypeptide, the second amino acid generally not being Pro.. In terms of biological role, removes 5-oxoproline from various penultimate amino acid residues except L-proline. This is Pyrrolidone-carboxylate peptidase from Coprothermobacter proteolyticus (strain ATCC 35245 / DSM 5265 / OCM 4 / BT).